We begin with the raw amino-acid sequence, 411 residues long: Heparan-sulfate 6-O-sulfotransferase 1 (411 aa).

The Cytoplasmic portion of the chain corresponds to 1–19 (MRRRRAGGRTMVERASKFV). Residues 20 to 37 (LVVAGSACFMLILYQYAG) form a helical; Signal-anchor for type II membrane protein membrane-spanning segment. At 38–411 (PGLSLGAPGG…DYMSHIIEKW (374 aa)) the chain is on the lumenal side. 93–101 (HIQKTGGTT) is a 3'-phosphoadenylyl sulfate binding site. Substrate contacts are provided by residues 123 to 124 (KK), arginine 140, tryptophan 145, and histidine 150. The active-site Proton acceptor is histidine 150. 3'-phosphoadenylyl sulfate-binding residues include arginine 185 and serine 193. The substrate site is built by histidine 197 and tryptophan 204. N-linked (GlcNAc...) asparagine glycosylation occurs at asparagine 264. 3'-phosphoadenylyl sulfate is bound at residue 317–319 (MQY). Asparagine 320 carries an N-linked (GlcNAc...) asparagine glycan. 323-324 (RA) serves as a coordination point for 3'-phosphoadenylyl sulfate. Residues 352–386 (KDLFQQRYQYKRQLERREQRLRNREERLLHRSKEA) are a coiled coil. Positions 380–401 (LHRSKEALPREDPEEPGRVPTE) are disordered.

This sequence belongs to the sulfotransferase 6 family. N-glycosylated. As to expression, expressed in fetal brain and liver.

It is found in the membrane. It catalyses the reaction alpha-D-glucosaminyl-[heparan sulfate](n) + 3'-phosphoadenylyl sulfate = 6-sulfo-alpha-D-glucosaminyl-[heparan sulfate](n) + adenosine 3',5'-bisphosphate + H(+). In terms of biological role, 6-O-sulfation enzyme which catalyzes the transfer of sulfate from 3'-phosphoadenosine 5'-phosphosulfate (PAPS) to position 6 of the N-sulfoglucosamine residue (GlcNS) of heparan sulfate. Critical for normal neuronal development where it may play a role in neuron branching. May also play a role in limb development. May prefer iduronic acid. This chain is Heparan-sulfate 6-O-sulfotransferase 1, found in Mus musculus (Mouse).